Here is a 92-residue protein sequence, read N- to C-terminus: Putative pterin-4-alpha-carbinolamine dehydratase 2 (92 aa).

Belongs to the pterin-4-alpha-carbinolamine dehydratase family.

The catalysed reaction is (4aS,6R)-4a-hydroxy-L-erythro-5,6,7,8-tetrahydrobiopterin = (6R)-L-erythro-6,7-dihydrobiopterin + H2O. This is Putative pterin-4-alpha-carbinolamine dehydratase 2 from Gloeobacter violaceus (strain ATCC 29082 / PCC 7421).